Here is a 40-residue protein sequence, read N- to C-terminus: Photosystem II reaction center protein T (40 aa).

A helical transmembrane segment spans residues 3–23 (ALVYTFLLVGTLGIIFFAIFF).

This sequence belongs to the PsbT family. PSII is composed of 1 copy each of membrane proteins PsbA, PsbB, PsbC, PsbD, PsbE, PsbF, PsbH, PsbI, PsbJ, PsbK, PsbL, PsbM, PsbT, PsbY, PsbZ, Psb30/Ycf12, at least 3 peripheral proteins of the oxygen-evolving complex and a large number of cofactors. It forms dimeric complexes.

The protein localises to the plastid. Its subcellular location is the chloroplast thylakoid membrane. Found at the monomer-monomer interface of the photosystem II (PS II) dimer, plays a role in assembly and dimerization of PSII. PSII is a light-driven water plastoquinone oxidoreductase, using light energy to abstract electrons from H(2)O, generating a proton gradient subsequently used for ATP formation. This is Photosystem II reaction center protein T from Anthoceros angustus (Hornwort).